Reading from the N-terminus, the 561-residue chain is Nucleoprotein (561 aa).

A binding site for the cap structure m7GTP region spans residues 52-237; the sequence is VRKDKRTDSD…ISHEPSALNI (186 aa). Positions 336-355 are disordered; the sequence is SKPSAIQPPVRNGGSPDLKQ. Mn(2+) contacts are provided by D380 and E382. The Zn(2+) site is built by E390, C497, H500, and C521. Residue D525 participates in Mn(2+) binding.

The protein belongs to the arenaviridae nucleocapsid protein family. In terms of assembly, homomultimerizes to form the nucleocapsid. Binds to viral genomic RNA. Interacts with glycoprotein G2. Interacts with protein Z; this interaction probably directs the encapsidated genome to budding sites. Interacts with protein L; this interaction does not interfere with Z-L interaction. Interacts with host IKBKE (via Protein kinase domain); the interaction inhibits IKBKE kinase activity.

Its subcellular location is the virion. The protein resides in the host cytoplasm. Functionally, encapsidates the genome, protecting it from nucleases. The encapsidated genomic RNA is termed the nucleocapsid (NC). Serves as template for viral transcription and replication. The increased presence of protein N in host cell does not seem to trigger the switch from transcription to replication as observed in other negative strain RNA viruses. Through the interaction with host IKBKE, strongly inhibits the phosphorylation and nuclear translocation of host IRF3, a protein involved in interferon activation pathway, leading to the inhibition of interferon-beta and IRF3-dependent promoters activation. Also encodes a functional 3'-5' exoribonuclease that degrades preferentially dsRNA substrates and thereby participates in the suppression of interferon induction. This chain is Nucleoprotein, found in Cavia cutleri (Guinea pig).